The following is a 720-amino-acid chain: F-box/LRR-repeat MAX2 homolog (720 aa).

Residues 14–60 form the F-box domain; it reads SSAILDLPEPLLLHILSFLTDVRSRHRAALACGRMRAAERATRSELS. LRR repeat units lie at residues 71–134, 135–158, 159–189, 190–218, 219–247, 248–279, 280–316, 317–344, 345–372, 373–398, 399–435, 436–452, 453–510, 511–537, 538–571, 572–606, 607–644, and 645–720; these read LFLS…QNAF, IAAR…DPTT, LANL…PDGA, DLEP…DVVR, ALTT…FKSS, ELGP…VGDD, ALLS…ITVA, GLVA…EAAP, AMEA…KASW, LHLD…LTDA, SLAA…TLRP, TLKE…HTAE, CLTA…KCRY, MEFD…LLSP, LISA…PRTI, FGLS…GQMD, LSLW…SLTL, and PAVG…QIDD.

As to quaternary structure, associates to a SCF (SKP1-CUL1-F-box protein) E3 ubiquitin-protein ligase complex. Interacts with D14 in a strigolactone-dependent manner. Interacts with SKP1, SKP5 and SKP20. As to expression, expressed in leaves. Expressed in roots, culms, leaf blades, leaf sheaths, shoot bases and panicles.

The protein localises to the nucleus. Involved in strigolactone (SL) signaling. Required for responses to SLs and the establishment of arbuscular mycorrhiza symbiosis in rice. Strigolactone-dependent association of D3 with D14 and D53 (a repressor of SL signaling) triggers D53 ubiquitination and degradation. Controls tillering by suppressing axillary bud activity. Tiller is a specialized grain-bearing branch that is formed on the unelongated basal internode and grows independently of the mother stem (culm) by means of its own adventitious roots. This chain is F-box/LRR-repeat MAX2 homolog, found in Oryza sativa subsp. japonica (Rice).